A 959-amino-acid polypeptide reads, in one-letter code: Kinesin-like protein NACK1 (959 aa).

Residues 1–28 (MTVRTPGTPASKIDKTPATTPNGHRGRE) are disordered. The region spanning 30 to 353 (KIVVTVRLRP…LYFATRAKEV (324 aa)) is the Kinesin motor domain. 117-124 (GQTSSGKT) contributes to the ATP binding site. A Phosphothreonine modification is found at threonine 145. Residues 362–429 (VVSDKQLVKH…LRRKLQEEQG (68 aa)) are a coiled coil. Disordered regions lie at residues 417-438 (VDELRRKLQEEQGPKPSESVSP), 451-473 (SPNLEEKAPVRSERTRNTMGRQS), 598-640 (LPSN…FLKS), and 658-700 (NRAP…SVNM). 2 stretches are compositionally biased toward basic and acidic residues: residues 418-429 (DELRRKLQEEQG) and 454-466 (LEEKAPVRSERTR). The stretch at 557–598 (KSVSANLKEEIARLHSQGSTIADLEEQLENVQKSLDKLVMSL) forms a coiled coil. Over residues 600–611 (SNNDQQSNNDTT) the composition is skewed to low complexity. Over residues 613-623 (KAKHPSKKKKL) the composition is skewed to basic residues. Polar residues predominate over residues 630–640 (NSINRQNFLKS). 2 positions are modified to phosphothreonine: threonine 675 and threonine 690. Positions 685 to 756 (SSKEGTPYRR…EANEAAGYNL (72 aa)) are required for the binding to NPK1.

Belongs to the TRAFAC class myosin-kinesin ATPase superfamily. Kinesin family. KIN-7 subfamily. As to quaternary structure, interacts (via C-terminus) with NPK1 (via C-terminus). In terms of processing, phosphorylated at Thr-145, Thr-675 and Thr-690 by CDKAs and CDKBs. The phosphorylation occurs before metaphase and inhibits the interaction with NPK1 preventing the transition to cytokinesis.

The protein localises to the cytoplasm. Its subcellular location is the nucleus. The protein resides in the cytoskeleton. It is found in the phragmoplast. In terms of biological role, probable plus end-directed motor protein that functions in the NACK-PQR (NPK1-NQK1/MEK1-NRK1) MAP kinase signaling pathway, which is essential for somatic cell cytokinesis, especially for the cell-plate formation and its expansion. Regulates the activity and the localization of NPK1 by association through the non-catalytic region of the kinase. The chain is Kinesin-like protein NACK1 (NACK1) from Nicotiana tabacum (Common tobacco).